A 67-amino-acid chain; its full sequence is MPFVNIRITKDGVTAEQKKQLIAGVTQLLVDTLGKNPATTVVIIDEVETDNWGIGGESVTERRQQAS.

The active-site Proton acceptor; via imino nitrogen is Pro2.

The protein belongs to the 4-oxalocrotonate tautomerase family.

The chain is Probable tautomerase K2 from Dickeya dadantii (strain 3937) (Erwinia chrysanthemi (strain 3937)).